A 241-amino-acid polypeptide reads, in one-letter code: Eukaryotic translation initiation factor 3 subunit J (241 aa).

Residues 1-94 (MDVSWDADNF…EKTAEEMTPE (94 aa)) form a disordered region. Acidic residues predominate over residues 26–45 (GEDEDDNVKESWEDEEEEKK). Residues 61 to 118 (KKKIHDKIAERERQEREKAERLVTEKTAEEMTPEQKLAEKLRQQKLQEESDLRLAMET) adopt a coiled-coil conformation. The segment covering 66–89 (DKIAERERQEREKAERLVTEKTAE) has biased composition (basic and acidic residues).

It belongs to the eIF-3 subunit J family. Component of the eukaryotic translation initiation factor 3 (eIF-3) complex.

The protein resides in the cytoplasm. Functionally, component of the eukaryotic translation initiation factor 3 (eIF-3) complex, which is involved in protein synthesis of a specialized repertoire of mRNAs and, together with other initiation factors, stimulates binding of mRNA and methionyl-tRNAi to the 40S ribosome. The eIF-3 complex specifically targets and initiates translation of a subset of mRNAs involved in cell proliferation. This is Eukaryotic translation initiation factor 3 subunit J from Bombyx mori (Silk moth).